The chain runs to 194 residues: Large ribosomal subunit protein uL5 (194 aa).

Belongs to the universal ribosomal protein uL5 family. In terms of assembly, part of the 50S ribosomal subunit; part of the 5S rRNA/L5/L18/L25 subcomplex. Contacts the 5S rRNA and the P site tRNA. Forms a bridge to the 30S subunit in the 70S ribosome.

Functionally, this is one of the proteins that bind and probably mediate the attachment of the 5S RNA into the large ribosomal subunit, where it forms part of the central protuberance. In the 70S ribosome it contacts protein S13 of the 30S subunit (bridge B1b), connecting the 2 subunits; this bridge is implicated in subunit movement. Contacts the P site tRNA; the 5S rRNA and some of its associated proteins might help stabilize positioning of ribosome-bound tRNAs. This chain is Large ribosomal subunit protein uL5, found in Chlorobium luteolum (strain DSM 273 / BCRC 81028 / 2530) (Pelodictyon luteolum).